A 237-amino-acid polypeptide reads, in one-letter code: Uridylate kinase (237 aa).

11–14 is a binding site for ATP; sequence KLSG. Gly53 lines the UMP pocket. 2 residues coordinate ATP: Gly54 and Arg58. UMP-binding positions include Asp73 and 134–141; that span reads TGNPFFTT. Positions 161, 167, and 170 each coordinate ATP.

This sequence belongs to the UMP kinase family. Homohexamer.

The protein resides in the cytoplasm. The enzyme catalyses UMP + ATP = UDP + ADP. It functions in the pathway pyrimidine metabolism; CTP biosynthesis via de novo pathway; UDP from UMP (UMPK route): step 1/1. Its activity is regulated as follows. Inhibited by UTP. Catalyzes the reversible phosphorylation of UMP to UDP. This Nitrosomonas eutropha (strain DSM 101675 / C91 / Nm57) protein is Uridylate kinase.